The primary structure comprises 107 residues: Toxin MT2730 (107 aa).

The segment at 1–42 is disordered; sequence MTHKRTKRQPAIAAGLNAPRRNRVGRQHGWPADVPSAEQRRA.

Functionally, toxic component of a type II toxin-antitoxin (TA) system. Its toxic effect is neutralized by coexpression with cognate antitoxin MT2731. This Mycobacterium tuberculosis (strain CDC 1551 / Oshkosh) protein is Toxin MT2730.